The following is a 541-amino-acid chain: Phosphoenolpyruvate carboxykinase (ATP) (541 aa).

Residues R64, Y206, and K212 each contribute to the substrate site. Residues K212, H231, and 247–255 contribute to the ATP site; that span reads GLSGTGKTT. Mn(2+)-binding residues include K212 and H231. D268 lines the Mn(2+) pocket. E296, R332, and T454 together coordinate ATP. R332 provides a ligand contact to substrate.

This sequence belongs to the phosphoenolpyruvate carboxykinase (ATP) family. Monomer. Mn(2+) is required as a cofactor.

Its subcellular location is the cytoplasm. The catalysed reaction is oxaloacetate + ATP = phosphoenolpyruvate + ADP + CO2. Its pathway is carbohydrate biosynthesis; gluconeogenesis. Involved in the gluconeogenesis. Catalyzes the conversion of oxaloacetate (OAA) to phosphoenolpyruvate (PEP) through direct phosphoryl transfer between the nucleoside triphosphate and OAA. This Wigglesworthia glossinidia brevipalpis protein is Phosphoenolpyruvate carboxykinase (ATP).